The chain runs to 465 residues: MLDDRARMEATKKEKVEQILAEFQLQEEDLKKVMSRMQKEMDRGLKLETHQEASVKMLPTYVRSTPEGSEVGDFLSLDLGGTNFRVMLVKVGEGEAGQWSVKTKHQMYSIPEDAMTGTAEMLFDYISECISDFLDKHQMKHKKLPLGFTFSFPVRHEDIDKGILLNWTKGFKASGAEGNNIVGLLRDAIKRRGDFEMDVVAMVNDTVATMISCYYEDRQCEVGMIVGTGCNACYMEEMQNVELVEGDEGRMCVNTEWGAFGNSGELDEFLLEYDRMVDESSVNPGQQLYEKIIGGKYMGELVRLVLLKLVEENLLFHGEASEQLRTRGAFETRFVSQVESDSGDRRQILNILSTLGLRPSVADCDIVRRACESVSTRAAHMCSAGLAGVINRMRESRSEDVMRITVGVDGSVYKLHPSFKERFHASVRRLTPNCEITFIESEEGSGRGAALVSAVACKKACMLGQ.

Residues 10 to 454 (ATKKEKVEQI…SGRGAALVSA (445 aa)) form the Hexokinase domain. The hexokinase small subdomain stretch occupies residues 67 to 203 (EGSEVGDFLS…DFEMDVVAMV (137 aa)). 78–83 (DLGGTN) contributes to the ATP binding site. Substrate contacts are provided by residues 151–152 (SF), 168–169 (TK), and 204–205 (ND). The interval 204–443 (NDTVATMISC…CEITFIESEE (240 aa)) is hexokinase large subdomain. Position 228 (Thr228) interacts with ATP. Asn231, Glu256, and Glu290 together coordinate substrate. Residues 295-296 (GK), 332-336 (TRFVS), and 411-415 (SVYKL) each bind ATP.

This sequence belongs to the hexokinase family. In terms of assembly, monomer. Interacts with MIDN; the interaction occurs preferentially at low glucose levels and results in inhibition of hexokinase activity. Interacts with GCKR; leading to sequestration in the nucleus.

It is found in the cytoplasm. The protein localises to the nucleus. The protein resides in the mitochondrion. The enzyme catalyses a D-hexose + ATP = a D-hexose 6-phosphate + ADP + H(+). It catalyses the reaction D-fructose + ATP = D-fructose 6-phosphate + ADP + H(+). It carries out the reaction D-glucose + ATP = D-glucose 6-phosphate + ADP + H(+). The catalysed reaction is D-mannose + ATP = D-mannose 6-phosphate + ADP + H(+). It functions in the pathway carbohydrate metabolism; hexose metabolism. It participates in carbohydrate degradation; glycolysis; D-glyceraldehyde 3-phosphate and glycerone phosphate from D-glucose: step 1/4. Its activity is regulated as follows. Subject to allosteric regulation. Low glucose and high fructose-6-phosphate triggers association with the inhibitor GCKR followed by sequestration in the nucleus. Functionally, catalyzes the phosphorylation of hexose, such as D-glucose, D-fructose and D-mannose, to hexose 6-phosphate (D-glucose 6-phosphate, D-fructose 6-phosphate and D-mannose 6-phosphate, respectively). Compared to other hexokinases, has a weak affinity for D-glucose, and is effective only when glucose is abundant. Mainly expressed in pancreatic beta cells and the liver and constitutes a rate-limiting step in glucose metabolism in these tissues. Since insulin secretion parallels glucose metabolism and the low glucose affinity of GCK ensures that it can change its enzymatic activity within the physiological range of glucose concentrations, GCK acts as a glucose sensor in the pancreatic beta cell. In pancreas, plays an important role in modulating insulin secretion. In liver, helps to facilitate the uptake and conversion of glucose by acting as an insulin-sensitive determinant of hepatic glucose usage. Required to provide D-glucose 6-phosphate for the synthesis of glycogen. Mediates the initial step of glycolysis by catalyzing phosphorylation of D-glucose to D-glucose 6-phosphate. The protein is Hexokinase-4 of Mus musculus (Mouse).